Consider the following 154-residue polypeptide: 6,7-dimethyl-8-ribityllumazine synthase (154 aa).

Residues Phe26, 60–62, and 84–86 contribute to the 5-amino-6-(D-ribitylamino)uracil site; these read ALE and CII. 89 to 90 serves as a coordination point for (2S)-2-hydroxy-3-oxobutyl phosphate; the sequence is ET. His92 (proton donor) is an active-site residue. Asn117 is a binding site for 5-amino-6-(D-ribitylamino)uracil. Arg131 lines the (2S)-2-hydroxy-3-oxobutyl phosphate pocket.

The protein belongs to the DMRL synthase family.

The enzyme catalyses (2S)-2-hydroxy-3-oxobutyl phosphate + 5-amino-6-(D-ribitylamino)uracil = 6,7-dimethyl-8-(1-D-ribityl)lumazine + phosphate + 2 H2O + H(+). Its pathway is cofactor biosynthesis; riboflavin biosynthesis; riboflavin from 2-hydroxy-3-oxobutyl phosphate and 5-amino-6-(D-ribitylamino)uracil: step 1/2. Catalyzes the formation of 6,7-dimethyl-8-ribityllumazine by condensation of 5-amino-6-(D-ribitylamino)uracil with 3,4-dihydroxy-2-butanone 4-phosphate. This is the penultimate step in the biosynthesis of riboflavin. This is 6,7-dimethyl-8-ribityllumazine synthase from Acidovorax ebreus (strain TPSY) (Diaphorobacter sp. (strain TPSY)).